The following is a 196-amino-acid chain: Holliday junction branch migration complex subunit RuvA (196 aa).

Residues 1–63 (MIEYIKGEIV…EDAHLLFGFA (63 aa)) form a domain I region. Residues 64–142 (EKIERELFLL…PMESMAGNLP (79 aa)) form a domain II region. Positions 142 to 146 (PEASV) are flexible linker. Positions 147–196 (SNGAVTEEAVAALVMLGFQKAASQKAVSAILKGSPTLAVEQVIKTALRML) are domain III.

This sequence belongs to the RuvA family. As to quaternary structure, homotetramer. Forms an RuvA(8)-RuvB(12)-Holliday junction (HJ) complex. HJ DNA is sandwiched between 2 RuvA tetramers; dsDNA enters through RuvA and exits via RuvB. An RuvB hexamer assembles on each DNA strand where it exits the tetramer. Each RuvB hexamer is contacted by two RuvA subunits (via domain III) on 2 adjacent RuvB subunits; this complex drives branch migration. In the full resolvosome a probable DNA-RuvA(4)-RuvB(12)-RuvC(2) complex forms which resolves the HJ.

Its subcellular location is the cytoplasm. The RuvA-RuvB-RuvC complex processes Holliday junction (HJ) DNA during genetic recombination and DNA repair, while the RuvA-RuvB complex plays an important role in the rescue of blocked DNA replication forks via replication fork reversal (RFR). RuvA specifically binds to HJ cruciform DNA, conferring on it an open structure. The RuvB hexamer acts as an ATP-dependent pump, pulling dsDNA into and through the RuvAB complex. HJ branch migration allows RuvC to scan DNA until it finds its consensus sequence, where it cleaves and resolves the cruciform DNA. The polypeptide is Holliday junction branch migration complex subunit RuvA (Parabacteroides distasonis (strain ATCC 8503 / DSM 20701 / CIP 104284 / JCM 5825 / NCTC 11152)).